The primary structure comprises 95 residues: Small ribosomal subunit protein bS16 (95 aa).

This sequence belongs to the bacterial ribosomal protein bS16 family.

In Mycoplasma genitalium (strain ATCC 33530 / DSM 19775 / NCTC 10195 / G37) (Mycoplasmoides genitalium), this protein is Small ribosomal subunit protein bS16.